A 919-amino-acid polypeptide reads, in one-letter code: Sarcosine dehydrogenase, mitochondrial (919 aa).

A mitochondrion-targeting transit peptide spans 1 to 22 (MASLSRVLRVAATCPRGRAAWN). Lys-38 is subject to N6-succinyllysine. His-109 bears the Tele-8alpha-FAD histidine mark. Lys-174 bears the N6-acetyllysine; alternate mark. Residue Lys-174 is modified to N6-succinyllysine; alternate. Residues Lys-278, Lys-378, Lys-392, and Lys-535 each carry the N6-succinyllysine modification. An N6-acetyllysine mark is found at Lys-560 and Lys-776. Tyr-778 bears the Phosphotyrosine mark. 3 positions are modified to N6-acetyllysine; alternate: Lys-803, Lys-885, and Lys-905. N6-succinyllysine; alternate is present on residues Lys-803, Lys-885, and Lys-905.

Belongs to the GcvT family. It depends on FAD as a cofactor.

It localises to the mitochondrion matrix. The enzyme catalyses (6S)-5,6,7,8-tetrahydrofolyl-(gamma-L-Glu)(n) + sarcosine + oxidized [electron-transfer flavoprotein] + H(+) = (6R)-5,10-methylenetetrahydrofolyl-(gamma-L-Glu)(n) + reduced [electron-transfer flavoprotein] + glycine. The protein operates within amine and polyamine degradation; sarcosine degradation; formaldehyde and glycine from sarcosine: step 1/1. Catalyzes the last step of the oxidative degradation of choline to glycine. Converts sarcosine into glycine. The chain is Sarcosine dehydrogenase, mitochondrial from Mus musculus (Mouse).